Reading from the N-terminus, the 255-residue chain is 5'-nucleotidase SurE (255 aa).

A divalent metal cation contacts are provided by Asp-8, Asp-9, Ser-40, and Asn-93.

Belongs to the SurE nucleotidase family. Requires a divalent metal cation as cofactor.

It localises to the cytoplasm. The catalysed reaction is a ribonucleoside 5'-phosphate + H2O = a ribonucleoside + phosphate. Functionally, nucleotidase that shows phosphatase activity on nucleoside 5'-monophosphates. The polypeptide is 5'-nucleotidase SurE (Rhodopseudomonas palustris (strain BisA53)).